Reading from the N-terminus, the 344-residue chain is Cathepsin B-like cysteine proteinase 5 (344 aa).

The N-terminal stretch at 1–15 (MWKLSAILLVAAASA) is a signal peptide. Residues 16–81 (VVIPGHREAP…DIVATEVSDA (66 aa)) constitute a propeptide that is removed on maturation. 6 disulfides stabilise this stretch: C95–C124, C107–C154, C143–C213, C144–C150, C183–C217, and C191–C203. Residue C110 is part of the active site. Residues H286 and N306 contribute to the active site.

The protein belongs to the peptidase C1 family.

The sequence is that of Cathepsin B-like cysteine proteinase 5 (cpr-5) from Caenorhabditis elegans.